The chain runs to 266 residues: Putative hydro-lyase Jann_2570 (266 aa).

Belongs to the D-glutamate cyclase family.

The protein is Putative hydro-lyase Jann_2570 of Jannaschia sp. (strain CCS1).